Reading from the N-terminus, the 184-residue chain is TNPVLDVDGNELQRGQLYYATSVMRPGGGLTLAAPKGSCPLNVAQAPFDEYSGRPLAFFPENADDDTVQEGSTLYIMFPEPTRCPQSTVWTFDREAGFVTTGGTTSKAIGPHNSRFAIRKAGDASSQPRDYQIEVCPCSTGVERPSCRMGCLGTLGLAEGGKNVLLNINNESPHTIRFVKVKEG.

Intrachain disulfides connect C39/C84 and C136/C147.

The protein belongs to the protease inhibitor I3 (leguminous Kunitz-type inhibitor) family. In terms of assembly, homodimer.

Its function is as follows. Inhibits trypsin and alpha-chymotrypsin. The sequence is that of Trypsin/chymotrypsin inhibitor from Alocasia macrorrhizos (Giant taro).